The following is a 745-amino-acid chain: Copper-transporting ATPase (745 aa).

One can recognise an HMA domain in the interval 1 to 67; it reads MKESFYIEGM…LIEKLGYSPK (67 aa). Over 1–83 the chain is Cytoplasmic; it reads MKESFYIEGM…KKEFFSPNVK (83 aa). Cu cation-binding residues include cysteine 12 and cysteine 15. The helical transmembrane segment at 84–104 threads the bilayer; sequence LALAVIFTLFVVYLSMGAMLS. Over 105 to 124 the chain is Extracellular; the sequence is PSLLPESLLAINNHSNFLNA. Residues 125-144 form a helical membrane-spanning segment; it reads CLQLIGALIVMHLGRDFYIQ. The Cytoplasmic portion of the chain corresponds to 145-151; that stretch reads GFKALWH. Residues 152–172 traverse the membrane as a helical segment; that stretch reads RQPNMSSLIAIGTSAALISSL. The Extracellular portion of the chain corresponds to 173–194; it reads WQLYLVYTNHYTDQWSYGHYYF. Residues 195 to 215 form a helical membrane-spanning segment; that stretch reads ESVCVILMFVMVGKRIENVSK. Topologically, residues 216–343 are cytoplasmic; that stretch reads DKALDAMQAL…KAEISRLADK (128 aa). Residues 344 to 366 form a helical membrane-spanning segment; it reads VSSVFVPSVIAIAILAFVVWLII. Residues 367-379 are Extracellular-facing; that stretch reads APKPDFWWNFGIA. A helical membrane pass occupies residues 380 to 397; sequence LEVFVSVLVISCPCALGL. Over 398 to 685 the chain is Cytoplasmic; that stretch reads ATPMSILVAN…KLSQATIKNI (288 aa). Aspartate 435 (4-aspartylphosphate intermediate) is an active-site residue. Mg(2+)-binding residues include aspartate 631 and aspartate 635. Residues 686–705 traverse the membrane as a helical segment; the sequence is KENLFWAFCYNSVFIPLACG. The Extracellular portion of the chain corresponds to 706–716; that stretch reads VLYKANIMLSP. The chain crosses the membrane as a helical span at residues 717–735; it reads AIAGLAMSLSSVSVVLNSQ. The Cytoplasmic segment spans residues 736–745; sequence RLRNFKIKDH.

This sequence belongs to the cation transport ATPase (P-type) (TC 3.A.3) family. Type IB subfamily.

Its subcellular location is the cell membrane. It catalyses the reaction Cu(2+)(in) + ATP + H2O = Cu(2+)(out) + ADP + phosphate + H(+). Its function is as follows. Probably involved in copper export. This Helicobacter pylori (Campylobacter pylori) protein is Copper-transporting ATPase (copA).